Reading from the N-terminus, the 145-residue chain is Hemoglobin subunit beta-2 (145 aa).

Residues 2–145 form the Globin domain; sequence HLTDQEIKYI…VADAVGKGYH (144 aa). Residues histidine 63 and histidine 91 each coordinate heme b.

It belongs to the globin family. In terms of tissue distribution, red blood cells.

In Telmatobius peruvianus (Andean frog), this protein is Hemoglobin subunit beta-2.